Consider the following 439-residue polypeptide: Serine/threonine-protein kinase 2 (439 aa).

The Protein kinase domain maps to 87 to 439 (NDDFYHISTG…IFSDWINGGN (353 aa)). ATP contacts are provided by residues 93–101 (ISTGGYGIV) and K117. D307 serves as the catalytic Proton acceptor.

This sequence belongs to the protein kinase superfamily. Ser/Thr protein kinase family. Poxviruses subfamily. In terms of processing, phosphorylated in vivo. Autophosphorylated in vitro.

It localises to the host endoplasmic reticulum. The protein resides in the host endoplasmic reticulum-Golgi intermediate compartment. The enzyme catalyses L-seryl-[protein] + ATP = O-phospho-L-seryl-[protein] + ADP + H(+). It carries out the reaction L-threonyl-[protein] + ATP = O-phospho-L-threonyl-[protein] + ADP + H(+). Essential serine-protein kinase involved in the early stage of virion morphogenesis. This is Serine/threonine-protein kinase 2 (OPG054) from Vaccinia virus (strain Ankara) (VACV).